The sequence spans 324 residues: Glyoxylate/hydroxypyruvate reductase B (324 aa).

Residues Arg-237 and Glu-266 contribute to the active site. His-285 serves as the catalytic Proton donor.

Belongs to the D-isomer specific 2-hydroxyacid dehydrogenase family. GhrB subfamily. Homodimer.

Its subcellular location is the cytoplasm. It catalyses the reaction glycolate + NADP(+) = glyoxylate + NADPH + H(+). The catalysed reaction is (R)-glycerate + NAD(+) = 3-hydroxypyruvate + NADH + H(+). The enzyme catalyses (R)-glycerate + NADP(+) = 3-hydroxypyruvate + NADPH + H(+). In terms of biological role, catalyzes the NADPH-dependent reduction of glyoxylate and hydroxypyruvate into glycolate and glycerate, respectively. This chain is Glyoxylate/hydroxypyruvate reductase B, found in Escherichia coli (strain ATCC 8739 / DSM 1576 / NBRC 3972 / NCIMB 8545 / WDCM 00012 / Crooks).